Consider the following 353-residue polypeptide: sn-glycerol-3-phosphate import ATP-binding protein UgpC (353 aa).

Positions 4–234 (ILLNDVRKSY…PASEFVAGFI (231 aa)) constitute an ABC transporter domain. 36–43 (GPSGCGKS) contacts ATP.

The protein belongs to the ABC transporter superfamily. sn-glycerol-3-phosphate importer (TC 3.A.1.1.3) family. The complex is composed of two ATP-binding proteins (UgpC), two transmembrane proteins (UgpA and UgpE) and a solute-binding protein (UgpB).

It localises to the cell inner membrane. It catalyses the reaction sn-glycerol 3-phosphate(out) + ATP + H2O = sn-glycerol 3-phosphate(in) + ADP + phosphate + H(+). Functionally, part of the ABC transporter complex UgpBAEC involved in sn-glycerol-3-phosphate (G3P) import. Responsible for energy coupling to the transport system. This is sn-glycerol-3-phosphate import ATP-binding protein UgpC from Paracoccus denitrificans (strain Pd 1222).